We begin with the raw amino-acid sequence, 336 residues long: 4-hydroxythreonine-4-phosphate dehydrogenase (336 aa).

The substrate site is built by His142 and Thr143. A divalent metal cation contacts are provided by His172, His217, and His274. 3 residues coordinate substrate: Lys282, Asn291, and Arg300.

The protein belongs to the PdxA family. In terms of assembly, homodimer. Zn(2+) is required as a cofactor. Requires Mg(2+) as cofactor. Co(2+) serves as cofactor.

It localises to the cytoplasm. It carries out the reaction 4-(phosphooxy)-L-threonine + NAD(+) = 3-amino-2-oxopropyl phosphate + CO2 + NADH. Its pathway is cofactor biosynthesis; pyridoxine 5'-phosphate biosynthesis; pyridoxine 5'-phosphate from D-erythrose 4-phosphate: step 4/5. Its function is as follows. Catalyzes the NAD(P)-dependent oxidation of 4-(phosphooxy)-L-threonine (HTP) into 2-amino-3-oxo-4-(phosphooxy)butyric acid which spontaneously decarboxylates to form 3-amino-2-oxopropyl phosphate (AHAP). This Trichlorobacter lovleyi (strain ATCC BAA-1151 / DSM 17278 / SZ) (Geobacter lovleyi) protein is 4-hydroxythreonine-4-phosphate dehydrogenase.